Here is a 528-residue protein sequence, read N- to C-terminus: Xylose import ATP-binding protein XylG (528 aa).

2 consecutive ABC transporter domains span residues 6–245 and 262–507; these read LQMN…VGRE and FEAR…LSHP. 38–45 is an ATP binding site; sequence GENGAGKS. A disordered region spans residues 504 to 528; that stretch reads LSHPGDPDSNDPANNNHNDNDRKTT.

It belongs to the ABC transporter superfamily. Xylose importer (TC 3.A.1.2.4) family. As to quaternary structure, the complex is composed of two ATP-binding proteins (XylG), two transmembrane proteins (XylH) and a solute-binding protein (XylF).

It localises to the cell inner membrane. It catalyses the reaction D-xylose(out) + ATP + H2O = D-xylose(in) + ADP + phosphate + H(+). Part of the ABC transporter complex XylFGH involved in xylose import. Responsible for energy coupling to the transport system. The polypeptide is Xylose import ATP-binding protein XylG (Pseudomonas syringae pv. tomato (strain ATCC BAA-871 / DC3000)).